The sequence spans 113 residues: UPF0122 protein MGAS10270_Spy1030 (113 aa).

This sequence belongs to the UPF0122 family.

Functionally, might take part in the signal recognition particle (SRP) pathway. This is inferred from the conservation of its genetic proximity to ftsY/ffh. May be a regulatory protein. The sequence is that of UPF0122 protein MGAS10270_Spy1030 from Streptococcus pyogenes serotype M2 (strain MGAS10270).